A 1737-amino-acid chain; its full sequence is MRLLWGLAWAFSFFASSLQKPRLLLFSPSVVNLGTPLSVGVQLLDAPAGQEVKGSVYLRNPTSGPCSPKKDFKLSSGNDFVLLRLEVPLKDVRSCGLFGLRRAPHIQLVAHSPWLKNTASKATETQGVNLLFSSRRGHIFVQTDQPIYNPGQRVRYRVFALDQKMRPSTDTLTVTVENSHGLRVRKKEVFAPTSIFQDDFIIPDISEPGTWKISARFSDGLESNRSTHFEVKKYVLPNFEVKLTPWKPYILTVPSYREEIQLDVQARYVYGKPVQGVAYTRFALMDEQGKKSFLRGLETQTKLVEGQTHISISRDQFQAALGKVNTEIGDLEGLRLYAAVAVIESPGGEMEEAELTSWPFVSSAFSLDLSHTKQHLVPGAPFLLQALVREMSGSEASDVPVKVSATLLSGSDSKVLDFQQNTNGIGQVSFSIHVPPTITELRLLVSAGSLYPAVAKLTVQAPPSRGPGFLSIEPLDLRSPRVGDTFVLSLRTVGIPMPTFSHYYYMIISRGQIMAMSREPRRALTSISVLVDHHLAPSFYFVAYFYHQGLPVANSLLINVQPGDCEGKLELKVDGAKEYRNGDSMKLQLQTDSEALVALGAVDTALYAVGGRSHKPLDMSKVFEVMNSYNLGCGPGGGDDALQVFQTAGLAFSDGDRLTQTKENLSCPKEKKSRQKRNVNFQKAISEKLGQYSSPDTKRCCQDGMTKLPMARTCEQRAARVPQPACREPFLSCCKFAEDLRRNQTRSQAGLARAQDMLQEEDLIDEDDILVRSFFPENWLWRVEPVDRSKLLTVWLPDSLTTWEIHGVSLSKSKGLCVAKPTRVRVFREFHLHLRLPISVRRFEQLELRPVLYNYLSEDVTVSVHVSPVEGLCLAGGGLLAQQVSVPAGSARPVAFSVVPTAAASIPLKVVARGSFTIGDAVSKILQIEKEGAIHREEIVYNLDPLNNLGRSLEIPGSSDPNVIPDGDFSSFVRVTASEPLETLGSEGALSPGGVASLLRLPRGCAEQTMIYLAPTLTASHYLDRTEQWSKLPPETKDHAVDLIQKGHMRIQQFRKKDGSFGAWLHRDSSTWLTAFVLKILSLAQEQIGDSPEKLQETAGWLLGQQLDDGSFHDPCPVIHRGMQGGLVGTDETVALTAFVVIALHHGLAVFQDENSQQLKKRVEASITKANSFLGQKASAGLLGAHASAITAYALTLTKASEDLQNVAHNSLMAMAEETGENLYWGSAIGSQDNVVSSTPAPRNPSEPVPQAPALWIETTAYGLLHLLLREGKGEMADKVATWLTHQGSFQGGFRSTQDTVVTLDALSAYWIASHTTEEKALNVTLSSMGRNGYKSHLLQLNNHQVKGLEEELKFSLGSTINVKVGGNSKGTLKILRTYNVLDMKNTTCQDLRIEVTVTGYVEYTREANEDYEYDYDMPAADDPSVHSQPVTPLQLFEGRRSRRRREAPKAADEQESRVQYTVCIWRNGNLGLSGMAIADITLLSGFQALRADLEKLTSLSDRYVSHFETDGPHVLLYFDSVPTTRECVGFGALQEVAVGLVQPASAVLYDYYSPDHKCSVFYAAPTKSKLLSTLCSADVCQCAEGKCPRQRRSLERGVEDKDGYRMKFACYYPRVEYGFQVKVLREDSRAAFRLFETKITQVLHFTKDAKASIGQTRNFLVRASCRLRLEPSKEYLIMGMDGVTSDLKGDPQYLLDSNTWIEEMPSERLCRSTRQRAACGQLNDFLQEYSSQGCQV.

The first 19 residues, 1 to 19 (MRLLWGLAWAFSFFASSLQ), serve as a signal peptide directing secretion. C66 and C95 are disulfide-bonded. N224 and N664 each carry an N-linked (GlcNAc...) asparagine glycan. An intrachain disulfide couples C633 to C667. Positions 674–677 (RQKR) are excised as a propeptide. 3 disulfide bridges follow: C700-C726, C701-C733, and C714-C734. In terms of domain architecture, Anaphylatoxin-like spans 700-734 (CCQDGMTKLPMARTCEQRAARVPQPACREPFLSCC). An N-linked (GlcNAc...) asparagine glycan is attached at N743. The segment at residues 1005–1008 (CAEQ) is a cross-link (isoglutamyl cysteine thioester (Cys-Gln)). N1323 and N1386 each carry an N-linked (GlcNAc...) asparagine glycan. A sulfotyrosine mark is found at Y1412, Y1414, and Y1416. Positions 1443 to 1446 (RRRR) are excised as a propeptide. 5 cysteine pairs are disulfide-bonded: C1464–C1528, C1576–C1581, C1588–C1666, C1611–C1735, and C1711–C1720. Residues 1588 to 1735 (CPRQRRSLER…FLQEYSSQGC (148 aa)) enclose the NTR domain. Y1676 carries the post-translational modification Sulfotyrosine.

In terms of assembly, in absence of complement activation, circulates in blood as a disulfide-linked trimer of an alpha, beta and gamma chain. As to quaternary structure, complement C4b is composed of complement C4b-A, complement C4 beta and complement C4 gamma chains that are associated via disulfide bonds. Non-enzymatic component of the C3 convertase, also named C4bC2b, composed of the serine protease complement C2b (C2), as well as complement C4b. Non-enzymatic component of the C5 convertase, also named C4bC2bC3b, composed of the serine protease complement C2b (C2), complement C3b, as well as complement C4b. Prior to secretion, the single-chain precursor is enzymatically cleaved by plasminogen (PLG) to yield non-identical chains alpha, beta and gamma. During activation of the complement systems, the alpha chain is cleaved into C4a and C4b by different proteases depending on the complement pathway: C4b stays linked to the beta and gamma chains, while C4a is released in the plasma. The alpha chain is cleaved by C1S to generate C4a and C4b following activation by the classical complement system. The alpha chain is cleaved to generate C4a and C4b by MASP2 following activation by the lectin complement system. The alpha chain is cleaved by GZMK to generate C4a and C4b following activation by the GZMK complement system. Further degradation of C4b by C1 into the inactive fragments C4c and C4d blocks the generation of C3 convertase. The proteolytic cleavages often are incomplete so that many structural forms can be found in plasma. Post-translationally, upon activation, the internal thioester bond reacts with carbohydrate antigens on the target surface to form amide or ester bonds, leading to covalent association with the surface of pathogens. In terms of processing, complement C4b interacts with complement C3b via a thioester linkage. N- and O-glycosylated. O-glycosylated with a core 1 or possibly core 8 glycan.

It localises to the secreted. Its subcellular location is the cell surface. Precursor of non-enzymatic components of the classical, lectin and GZMK complement pathways, which consist in a cascade of proteins that leads to phagocytosis and breakdown of pathogens and signaling that strengthens the adaptive immune system. Functionally, non-enzymatic component of C3 and C5 convertases. Generated following cleavage by complement proteases (C1S, MASP2 or GZMK, depending on the complement pathway), it covalently attaches to the surface of pathogens, where it acts as an opsonin that marks the surface of antigens for removal. It then recruits the serine protease complement C2b to form the C3 and C5 convertases, which cleave and activate C3 and C5, respectively, the next components of the complement pathways. Complement C4b-A isotype is responsible for effective binding to form amide bonds with immune aggregates or protein antigens, while complement C4b-B isotype catalyzes the transacylation of the thioester carbonyl group to form ester bonds with carbohydrate antigens. In terms of biological role, putative humoral mediator released following cleavage by complement proteases (C1S, MASP2 or GZMK, depending on the complement pathway). While it is strongly similar to anaphylatoxins, its role is unclear. Was reported to act as a mediator of local inflammatory process; however these effects were probably due to contamination with C3a and/C5a anaphylatoxins in biological assays. This is Complement C4 from Rattus norvegicus (Rat).